Here is a 689-residue protein sequence, read N- to C-terminus: MSEKTFLVEIGTEELPPKALRSLAESFAANFTAELDNAGLAHGTVQWFAAPRRLALKVANLAEAQPDREIEKRGPAIAQAFDAEGKPSKAAEGWARGCGITVDQAERLTSDKGEWLLYRAHVKGESTEALLPNMVATSLAKLPIPKLMRWGASDVHFVRPVHTVTLLLGDKVIPATILGIQSDRVIRGHRFMGEPEFTIDNADQYPEILRERGKVIADYEERKAKIKADAEEAARKIGGNADLSESLLEEVASLVEWPVVLTAKFEEKFLAVPSEALVYTMKGDQKYFPVYANDGKLLPNFIFVANIESKDPQQIISGNEKVVRPRLADAEFFFNTDRKKRLEDNLPRLQTVLFQQQLGTLRDKTDRIQALAGWIAEQIGADVNHATRAGLLSKCDLMTNMVFEFTDTQGVMGMHYARHDGEAEDVAVALNEQYQPRFAGDDLPSNPVACALAIADKMDTLAGIFGIGQHPKGDKDPFALRRAALGVLRIIVEKNLNLDLQTLTEEAVRLYGDKLTNANVVDDVIDFMLGRFRAWYQDEGYTVDTIQAVLARRPTRPADFDARMKAVSHFRTLDAAAALAAANKRVSNILAKSDEVLSDRVNASTLKEPEEIKLAMQVVVLRDKLEPYFAEGRYQDALVELAELREPVDAFFDKVMVMVDDKELRLNRLTMLEKLRELFLRVADISLLQ.

It belongs to the class-II aminoacyl-tRNA synthetase family. In terms of assembly, tetramer of two alpha and two beta subunits.

It localises to the cytoplasm. It catalyses the reaction tRNA(Gly) + glycine + ATP = glycyl-tRNA(Gly) + AMP + diphosphate. In Escherichia coli O8 (strain IAI1), this protein is Glycine--tRNA ligase beta subunit.